The following is a 122-amino-acid chain: Large ribosomal subunit protein uL14 (122 aa).

This sequence belongs to the universal ribosomal protein uL14 family. As to quaternary structure, part of the 50S ribosomal subunit. Forms a cluster with proteins L3 and L19. In the 70S ribosome, L14 and L19 interact and together make contacts with the 16S rRNA in bridges B5 and B8.

In terms of biological role, binds to 23S rRNA. Forms part of two intersubunit bridges in the 70S ribosome. The sequence is that of Large ribosomal subunit protein uL14 from Lactobacillus delbrueckii subsp. bulgaricus (strain ATCC BAA-365 / Lb-18).